Reading from the N-terminus, the 260-residue chain is Ribosomal RNA small subunit methyltransferase J (260 aa).

S-adenosyl-L-methionine-binding positions include 125 to 126 (ER) and Asp-179.

It belongs to the methyltransferase superfamily. RsmJ family.

The protein resides in the cytoplasm. The enzyme catalyses guanosine(1516) in 16S rRNA + S-adenosyl-L-methionine = N(2)-methylguanosine(1516) in 16S rRNA + S-adenosyl-L-homocysteine + H(+). Functionally, specifically methylates the guanosine in position 1516 of 16S rRNA. In Pseudomonas fluorescens (strain Pf0-1), this protein is Ribosomal RNA small subunit methyltransferase J.